We begin with the raw amino-acid sequence, 153 residues long: Endoribonuclease YbeY (153 aa).

The Zn(2+) site is built by histidine 116, histidine 120, and histidine 126.

It belongs to the endoribonuclease YbeY family. The cofactor is Zn(2+).

It is found in the cytoplasm. In terms of biological role, single strand-specific metallo-endoribonuclease involved in late-stage 70S ribosome quality control and in maturation of the 3' terminus of the 16S rRNA. The sequence is that of Endoribonuclease YbeY from Paraburkholderia phytofirmans (strain DSM 17436 / LMG 22146 / PsJN) (Burkholderia phytofirmans).